Consider the following 263-residue polypeptide: MVGALEALISQGHGGERVAKRQRSATLLDLDILDCPICCEGLTCPIFQCENGHLACSSCCPKLRNKCPACPMENILESILVTCPNDMFGCTESFLYGKKSTHEEECIFSLCSCPSLDCEYSGRYEDLYDHYKLTHISNSYWTTNCFRSSIPYKAPMLISDKIQITRVYEKKILFAVQCFRESCGVYVTVSCIAPSAPEVGQFSYQISYTVDEHTMVYRSPQMKRVRKVSFETPQENFMLIPHNLLRSELLDIKLSIVETSNQE.

The RING-type; degenerate zinc finger occupies C35 to P71. Residues I75–N261 are SBD. Residues S78–I136 form an SIAH-type zinc finger. Positions 83, 90, 102, 106, 113, 118, 130, and 135 each coordinate Zn(2+).

The protein belongs to the SINA (Seven in absentia) family.

It carries out the reaction S-ubiquitinyl-[E2 ubiquitin-conjugating enzyme]-L-cysteine + [acceptor protein]-L-lysine = [E2 ubiquitin-conjugating enzyme]-L-cysteine + N(6)-ubiquitinyl-[acceptor protein]-L-lysine.. It functions in the pathway protein modification; protein ubiquitination. In terms of biological role, E3 ubiquitin-protein ligase that mediates ubiquitination and subsequent proteasomal degradation of target proteins. E3 ubiquitin ligases accept ubiquitin from an E2 ubiquitin-conjugating enzyme in the form of a thioester and then directly transfers the ubiquitin to targeted substrates. It probably triggers the ubiquitin-mediated degradation of different substrates. The sequence is that of E3 ubiquitin-protein ligase SINA-like 8 from Arabidopsis thaliana (Mouse-ear cress).